A 397-amino-acid chain; its full sequence is Elongation factor Tu (397 aa).

The region spanning 10-207 is the tr-type G domain; the sequence is KPHVNIGTIG…ACDSYIEEPE (198 aa). The interval 19-26 is G1; it reads GHIDHGKT. 19–26 is a GTP binding site; sequence GHIDHGKT. Thr26 provides a ligand contact to Mg(2+). A G2 region spans residues 60-64; the sequence is GITIA. Residues 81–84 are G3; sequence DCPG. GTP-binding positions include 81-85 and 136-139; these read DCPGH and NKCD. The G4 stretch occupies residues 136–139; the sequence is NKCD. Residues 174-176 form a G5 region; the sequence is SAL.

It belongs to the TRAFAC class translation factor GTPase superfamily. Classic translation factor GTPase family. EF-Tu/EF-1A subfamily. Monomer.

It localises to the cytoplasm. The enzyme catalyses GTP + H2O = GDP + phosphate + H(+). GTP hydrolase that promotes the GTP-dependent binding of aminoacyl-tRNA to the A-site of ribosomes during protein biosynthesis. The chain is Elongation factor Tu from Maridesulfovibrio salexigens (strain ATCC 14822 / DSM 2638 / NCIMB 8403 / VKM B-1763) (Desulfovibrio salexigens).